Here is a 373-residue protein sequence, read N- to C-terminus: tRNA-specific 2-thiouridylase MnmA (373 aa).

ATP contacts are provided by residues 12-19 (GMSGGVDS) and M38. Positions 98–100 (NPD) are interaction with target base in tRNA. C103 functions as the Nucleophile in the catalytic mechanism. C103 and C200 form a disulfide bridge. ATP is bound at residue G127. Residues 150–152 (KDQ) are interaction with tRNA. C200 serves as the catalytic Cysteine persulfide intermediate. The segment at 312-313 (RY) is interaction with tRNA.

The protein belongs to the MnmA/TRMU family.

It localises to the cytoplasm. It catalyses the reaction S-sulfanyl-L-cysteinyl-[protein] + uridine(34) in tRNA + AH2 + ATP = 2-thiouridine(34) in tRNA + L-cysteinyl-[protein] + A + AMP + diphosphate + H(+). Its function is as follows. Catalyzes the 2-thiolation of uridine at the wobble position (U34) of tRNA, leading to the formation of s(2)U34. The sequence is that of tRNA-specific 2-thiouridylase MnmA from Streptococcus agalactiae serotype III (strain NEM316).